The following is a 360-amino-acid chain: Peptide chain release factor 1 (360 aa).

At glutamine 236 the chain carries N5-methylglutamine.

This sequence belongs to the prokaryotic/mitochondrial release factor family. Methylated by PrmC. Methylation increases the termination efficiency of RF1.

It localises to the cytoplasm. Its function is as follows. Peptide chain release factor 1 directs the termination of translation in response to the peptide chain termination codons UAG and UAA. The protein is Peptide chain release factor 1 of Limosilactobacillus reuteri subsp. reuteri (strain JCM 1112) (Lactobacillus reuteri).